Here is a 123-residue protein sequence, read N- to C-terminus: MYRKGAQAERELIKLLEKHGFAVVRSAGSKKVDLVAGNGKKYLCIEVKVTKKDHLYVGKRDMGRLIEFSRRFGGIPVLAVKFLNVGWRFIEVSPKIEKFVFTPSSGVSLEVLLGIQKTLEGKS.

Glutamate 9 contacts Mg(2+). Residue serine 29 is part of the active site. Aspartate 33 and glutamate 46 together coordinate Mg(2+).

Belongs to the Holliday junction resolvase Hjc family. As to quaternary structure, homodimer. Probably interacts with PCNA and RadB. The cofactor is Mg(2+). Mn(2+) is required as a cofactor.

The catalysed reaction is Endonucleolytic cleavage at a junction such as a reciprocal single-stranded crossover between two homologous DNA duplexes (Holliday junction).. With respect to regulation, cleavage inhibited by RadB in the absence (but not presence) of ATP. In terms of biological role, a structure-specific endonuclease that resolves Holliday junction (HJ) intermediates during genetic recombination. Cleaves 4-way DNA junctions introducing paired nicks in opposing strands, leaving a 5'-terminal phosphate and a 3'-terminal hydroxyl group that are subsequently ligated to produce recombinant products. Cleaves both mobile and immobile junctions. Binds 4-way junction DNA, a synthetic Hj, binding is not competed by dsDNA. The sequence is that of Crossover junction endodeoxyribonuclease Hjc from Pyrococcus furiosus (strain ATCC 43587 / DSM 3638 / JCM 8422 / Vc1).